The sequence spans 514 residues: 2,3-bisphosphoglycerate-independent phosphoglycerate mutase (514 aa).

Mn(2+) contacts are provided by D15 and S65. S65 functions as the Phosphoserine intermediate in the catalytic mechanism. Residues H126, 156–157 (RD), R188, R194, 261–264 (RADR), and K335 each bind substrate. Residues D403, H407, D444, H445, and H462 each contribute to the Mn(2+) site.

The protein belongs to the BPG-independent phosphoglycerate mutase family. In terms of assembly, monomer. It depends on Mn(2+) as a cofactor.

It carries out the reaction (2R)-2-phosphoglycerate = (2R)-3-phosphoglycerate. It functions in the pathway carbohydrate degradation; glycolysis; pyruvate from D-glyceraldehyde 3-phosphate: step 3/5. Catalyzes the interconversion of 2-phosphoglycerate and 3-phosphoglycerate. This chain is 2,3-bisphosphoglycerate-independent phosphoglycerate mutase, found in Syntrophotalea carbinolica (strain DSM 2380 / NBRC 103641 / GraBd1) (Pelobacter carbinolicus).